A 147-amino-acid polypeptide reads, in one-letter code: Antiholin-like protein LrgA (147 aa).

Transmembrane regions (helical) follow at residues Pro12–Ile32, Phe35–Cys55, Asn74–Ser94, and Phe98–Val118.

This sequence belongs to the CidA/LrgA family. LrgA subfamily.

It is found in the cell membrane. Inhibits the expression or activity of extracellular murein hydrolases by interacting, possibly with LrgB, with the holin-like proteins CidA and/or CidB. The LrgAB and CidAB proteins may affect the proton motive force of the membrane. May be involved in programmed cell death (PCD), possibly triggering PCD in response to antibiotics and environmental stresses. This chain is Antiholin-like protein LrgA, found in Staphylococcus aureus (strain MSSA476).